A 272-amino-acid chain; its full sequence is Tropinone reductase-like 1 (272 aa).

17-41 (IITGGASGIGACTAELFHENGAKVV) lines the NAD(+) pocket. Residue Ser150 participates in substrate binding. Tyr163 functions as the Proton acceptor in the catalytic mechanism.

The protein belongs to the short-chain dehydrogenases/reductases (SDR) family.

Has no tropinone reductase activity. In Erythroxylum coca (Coca plant), this protein is Tropinone reductase-like 1.